Consider the following 564-residue polypeptide: Major facilitator superfamily transporter MPN_076 (564 aa).

12 helical membrane passes run Met-1 to Asp-21, Ile-65 to Tyr-85, Val-89 to Leu-109, Ile-176 to Leu-196, Asn-220 to Val-240, Val-249 to Phe-269, Met-306 to Trp-326, Ala-358 to Phe-378, Ile-404 to Val-424, Ala-425 to Leu-445, Val-457 to Ile-477, and Gly-501 to Val-521.

This sequence belongs to the major facilitator superfamily.

It is found in the cell membrane. The protein is Major facilitator superfamily transporter MPN_076 of Mycoplasma pneumoniae (strain ATCC 29342 / M129 / Subtype 1) (Mycoplasmoides pneumoniae).